A 222-amino-acid polypeptide reads, in one-letter code: RING finger protein 141 (222 aa).

Residues 147-184 (CCICMDGKADLILPCAHSFCQKCIDKWSGQSRNCPVCR) form an RING-type zinc finger.

The protein is RING finger protein 141 (rnf141) of Danio rerio (Zebrafish).